The following is a 920-amino-acid chain: Phosphoenolpyruvate carboxylase (920 aa).

Active-site residues include His-138 and Lys-583.

Belongs to the PEPCase type 1 family. Mg(2+) serves as cofactor.

It catalyses the reaction oxaloacetate + phosphate = phosphoenolpyruvate + hydrogencarbonate. Its function is as follows. Forms oxaloacetate, a four-carbon dicarboxylic acid source for the tricarboxylic acid cycle. This chain is Phosphoenolpyruvate carboxylase, found in Streptococcus pyogenes serotype M3 (strain ATCC BAA-595 / MGAS315).